A 294-amino-acid polypeptide reads, in one-letter code: Thymidylate synthase 1/2 (294 aa).

DUMP is bound by residues arginine 29 and 154-155 (RR). Residue cysteine 174 is the Nucleophile of the active site. DUMP-binding positions include 194 to 197 (RSGD), asparagine 205, and 235 to 237 (HVY). Position 197 (aspartate 197) interacts with (6R)-5,10-methylene-5,6,7,8-tetrahydrofolate.

This sequence belongs to the thymidylate synthase family.

The catalysed reaction is dUMP + (6R)-5,10-methylene-5,6,7,8-tetrahydrofolate = 7,8-dihydrofolate + dTMP. The protein operates within pyrimidine metabolism; dTTP biosynthesis. This is Thymidylate synthase 1/2 (TS-1) from Encephalitozoon cuniculi (strain GB-M1) (Microsporidian parasite).